A 107-amino-acid polypeptide reads, in one-letter code: Prepilin peptidase-dependent protein C (107 aa).

Residues 1 to 10 constitute a propeptide that is removed on maturation; that stretch reads MSASLKNQQG. F11 is subject to N-methylphenylalanine. A helical transmembrane segment spans residues 11–30; it reads FSLPEVMLAMVLMVMIVTAL.

The protein localises to the membrane. Not yet known. The sequence is that of Prepilin peptidase-dependent protein C (ppdC) from Escherichia coli (strain K12).